We begin with the raw amino-acid sequence, 214 residues long: Alpha-S1-casein (214 aa).

Positions 1 to 15 are cleaved as a signal peptide; sequence MKLLILTCLVAVALA. Serine 27 is modified (phosphoserine; in allele A). Serine 56 is subject to Phosphoserine; in allele C. Phosphoserine is present on residues serine 61 and serine 63. The disordered stretch occupies residues 69-91; sequence MEDAKQMKAGSSSSSEEIVPNSA. Serine 79 is modified (phosphoserine; in alleles A and C). Phosphoserine is present on serine 80. Serine 81 carries the phosphoserine; in alleles A and C modification. A Phosphoserine modification is found at serine 82. Serine 83 is subject to Phosphoserine; in alleles A and C. Serine 90 bears the Phosphoserine mark. The segment at 105–111 is opioid-like peptide sequence; sequence RYLGYLE. Serine 130 is modified (phosphoserine).

It belongs to the alpha-casein family. As to expression, mammary gland specific. Secreted in milk.

It localises to the secreted. Important role in the capacity of milk to transport calcium phosphate. The protein is Alpha-S1-casein (CSN1S1) of Ovis aries (Sheep).